The following is a 1023-amino-acid chain: Peroxisome proliferator-activated receptor gamma coactivator 1-beta (1023 aa).

Residues 1 to 91 (MAGNDCGALL…LFQIDSENEA (91 aa)) form an abolishes DNA transcriptional activity when missing region. The disordered stretch occupies residues 122-148 (LSCTSASPAPSSAPPSPAPEKPSAPAP). Positions 132 to 146 (SSAPPSPAPEKPSAP) are enriched in pro residues. The short motif at 156–160 (LQKLL) is the LXXLL motif 1 element. Disordered regions lie at residues 165–210 (YPTS…QSQS), 237–278 (LQSP…PGAP), and 302–331 (RKLP…WSRH). The LXXLL motif 2 signature appears at 343–347 (LRELL). 4 disordered regions span residues 369 to 463 (LTPR…LPWT), 520 to 567 (RELG…QLPP), 601 to 623 (TAGL…FKPD), and 636 to 683 (LPSP…GQKR). Position 384 is a phosphoserine (S384). Positions 412–422 (LRLEVKREVRR) are enriched in basic and acidic residues. Over residues 429–450 (QEEEDEEEEEEEEEEEKEEEEE) the composition is skewed to acidic residues. A Phosphoserine modification is found at S524. Over residues 614-623 (PTEEDPFKPD) the composition is skewed to basic and acidic residues. A Phosphoserine modification is found at S638. The HCFC1-binding-motif (HBM) signature appears at 691 to 694 (DHDY). 2 disordered regions span residues 717–758 (VHLE…LRDH) and 779–867 (DLAS…WSPA). Residues 793 to 805 (EDSSSSSGESSFL) show a composition bias toward low complexity. A compositionally biased stretch (acidic residues) spans 806–825 (PEEEEEEGEEEEEDDEEEDS). The span at 849–866 (CSRSRSSSGSSPCHSWSP) shows a compositional bias: low complexity. The RRM domain occupies 902–976 (RVVYIQNLSS…RNEPSFQLSY (75 aa)).

Interacts with hepatocyte nuclear factor 4-alpha/HNF4A, Sterol regulatory binding transcription factor 1/SREBF1, PPAR-alpha/PPARA, thyroid hormone receptor beta/THRB and host cell factor/HCFC1. Interacts with estrogen-related receptor gamma/ESRRG and alpha/ESRRA. Interacts with PRDM16. Interacts with estrogen receptor alpha/ESR1. Ubiquitous with higher expression in heart, brain and skeletal muscle.

It localises to the nucleus. In terms of biological role, plays a role of stimulator of transcription factors and nuclear receptors activities. Activates transcriptional activity of estrogen receptor alpha, nuclear respiratory factor 1 (NRF1) and glucocorticoid receptor in the presence of glucocorticoids. May play a role in constitutive non-adrenergic-mediated mitochondrial biogenesis as suggested by increased basal oxygen consumption and mitochondrial number when overexpressed. May be involved in fat oxidation and non-oxidative glucose metabolism and in the regulation of energy expenditure. Induces the expression of PERM1 in the skeletal muscle in an ESRRA-dependent manner. The polypeptide is Peroxisome proliferator-activated receptor gamma coactivator 1-beta (PPARGC1B) (Homo sapiens (Human)).